Reading from the N-terminus, the 350-residue chain is Biotin synthase (350 aa).

One can recognise a Radical SAM core domain in the interval 41-268 (NEVQVSRLLS…KSRVRLSAGR (228 aa)). Residues Cys-56, Cys-60, and Cys-63 each coordinate [4Fe-4S] cluster. [2Fe-2S] cluster is bound by residues Cys-100, Cys-131, Cys-191, and Arg-263.

This sequence belongs to the radical SAM superfamily. Biotin synthase family. As to quaternary structure, homodimer. [4Fe-4S] cluster serves as cofactor. [2Fe-2S] cluster is required as a cofactor.

It catalyses the reaction (4R,5S)-dethiobiotin + (sulfur carrier)-SH + 2 reduced [2Fe-2S]-[ferredoxin] + 2 S-adenosyl-L-methionine = (sulfur carrier)-H + biotin + 2 5'-deoxyadenosine + 2 L-methionine + 2 oxidized [2Fe-2S]-[ferredoxin]. It participates in cofactor biosynthesis; biotin biosynthesis; biotin from 7,8-diaminononanoate: step 2/2. Its function is as follows. Catalyzes the conversion of dethiobiotin (DTB) to biotin by the insertion of a sulfur atom into dethiobiotin via a radical-based mechanism. This chain is Biotin synthase, found in Shewanella pealeana (strain ATCC 700345 / ANG-SQ1).